A 526-amino-acid polypeptide reads, in one-letter code: Nucleobase-ascorbate transporter 4 (526 aa).

Transmembrane regions (helical) follow at residues 42 to 62 (IVMLGTTVIIPSILVPLMGGG), 69 to 89 (VINTVLFVSGINTLLQSLFGS), 91 to 111 (LPVVMGASYAYLIPALYITFS), 131 to 151 (IQGALIIASISHMIMGFFGLW), 157 to 177 (FLSPLSAAPLVILTGVGLLAF), 186 to 206 (IEIGLPALIILIILSQYLPHL), 217 to 237 (FAVLFTIAIVWAYAEILTAAG), 282 to 302 (AFAMMAATYVAIVETTGSFIA), 359 to 381 (RVVQISAGFMIFFSIFGKFGAVL), 388 to 410 (IFAALYCVLFAYVASAGLGLLQF), 420 to 440 (FILGFSIFIGLSVAQYFTEYL), and 457 to 477 (VIMQVIFSSAATVGIMAAFLL).

This sequence belongs to the nucleobase:cation symporter-2 (NCS2) (TC 2.A.40) family. In terms of tissue distribution, highly expressed in the root central cylinder. Expressed in the filaments and stigmatic papillae of pollinated flowers and developing siliques.

Its subcellular location is the membrane. This chain is Nucleobase-ascorbate transporter 4 (NAT4), found in Arabidopsis thaliana (Mouse-ear cress).